The primary structure comprises 229 residues: Ribonuclease 3 (229 aa).

One can recognise an RNase III domain in the interval phenylalanine 2–glycine 130. Glutamate 43 serves as a coordination point for Mg(2+). Aspartate 47 is a catalytic residue. The Mg(2+) site is built by aspartate 116 and glutamate 119. Residue glutamate 119 is part of the active site. The DRBM domain maps to aspartate 157–glycine 226.

It belongs to the ribonuclease III family. As to quaternary structure, homodimer. Mg(2+) is required as a cofactor.

The protein resides in the cytoplasm. It catalyses the reaction Endonucleolytic cleavage to 5'-phosphomonoester.. Functionally, digests double-stranded RNA. Involved in the processing of primary rRNA transcript to yield the immediate precursors to the large and small rRNAs (23S and 16S). Processes some mRNAs, and tRNAs when they are encoded in the rRNA operon. Processes pre-crRNA and tracrRNA of type II CRISPR loci if present in the organism. In Oleidesulfovibrio alaskensis (strain ATCC BAA-1058 / DSM 17464 / G20) (Desulfovibrio alaskensis), this protein is Ribonuclease 3.